Reading from the N-terminus, the 372-residue chain is tRNA-specific 2-thiouridylase MnmA (372 aa).

ATP-binding positions include 13 to 20 (GMSGGVDS) and methionine 39. Positions 99 to 101 (NPD) are interaction with target base in tRNA. Cysteine 104 acts as the Nucleophile in catalysis. Cysteine 104 and cysteine 200 are disulfide-bonded. Position 128 (glycine 128) interacts with ATP. Residues 150 to 152 (KDQ) are interaction with tRNA. Catalysis depends on cysteine 200, which acts as the Cysteine persulfide intermediate. Residues 310–311 (RY) form an interaction with tRNA region.

The protein belongs to the MnmA/TRMU family.

It is found in the cytoplasm. The catalysed reaction is S-sulfanyl-L-cysteinyl-[protein] + uridine(34) in tRNA + AH2 + ATP = 2-thiouridine(34) in tRNA + L-cysteinyl-[protein] + A + AMP + diphosphate + H(+). Catalyzes the 2-thiolation of uridine at the wobble position (U34) of tRNA, leading to the formation of s(2)U34. The chain is tRNA-specific 2-thiouridylase MnmA from Bacillus pumilus (strain SAFR-032).